The sequence spans 38 residues: Putative ORF10 protein (38 aa).

Binds host ZYG11B. This would not play any role in SARS-CoV-2 infection.

The polypeptide is Putative ORF10 protein (Severe acute respiratory syndrome coronavirus 2 (2019-nCoV)).